We begin with the raw amino-acid sequence, 291 residues long: MQEAALGMMGATVGGDGDTAVVAEQNRQLKGEIATHPMYEQLLAAHVACLRVATPIDQLPIIEAQLSQSHHLLRSYASTAVGYHHDRHELDNFLAQYVMVLCSFKEQLQQHVRVHAVEAVMACREIENNLHSLTGATLGEGSGATMSEDEDDLPMDFSSDNSGVDFSGGHDMTGFGPLLPTESERSLMERVRQELKLELKQGFKSRIEDVREEIMRKRRAGKLPGDTTTVLKNWWQQHCKWPYPTEDDKAKLVEETGLQLKQINNWFINQRKRNWHNNSHSLTSLKSKRKH.

An ELK domain is found at 194–214; it reads ELKLELKQGFKSRIEDVREEI. The homeobox; TALE-type DNA-binding region spans 215 to 278; the sequence is MRKRRAGKLP…NQRKRNWHNN (64 aa).

The protein belongs to the TALE/KNOX homeobox family. In terms of assembly, may form heterodimeric complex with the TALE/BELL proteins. Interacts with OFP1, OFP2, OFP3, OFP4 and OFP6.

It localises to the nucleus. May be involved in secondary cell wall biosynthesis. The sequence is that of Homeobox protein knotted-1-like 7 (KNAT7) from Arabidopsis thaliana (Mouse-ear cress).